The sequence spans 387 residues: Natterin-4 (387 aa).

The first 18 residues, 1–18 (MKLLVLLVTLLVLSWTSA), serve as a signal peptide directing secretion. A propeptide spanning residues 19–46 (EDVGDQEILQQHNEDNNHKSELGEAAPQ) is cleaved from the precursor. Residues 31-40 (NEDNNHKSEL) are compositionally biased toward basic and acidic residues. The tract at residues 31–57 (NEDNNHKSELGEAAPQRTDNETSQLGQ) is disordered.

This sequence belongs to the natterin family. Contains 4 disulfide bonds. In terms of tissue distribution, expressed by the venom gland.

Its subcellular location is the secreted. Inhibited by tissue-kallikrein inhibitor TKI and trasylol. Plasma kallikrein inhibitor PKSI527 and classical inhibitors of serine-, metallo-, thiol- or aspartate-peptidases evokes a minor inhibition of the peptide digestion. In terms of biological role, shows nociceptive, edema-inducing and kininogenase activity with release of kallidin from low molecular weight kininogen. The cleavage occurs at Met-Lys bonds. This is Natterin-4 from Thalassophryne nattereri (Copper Joe toadfish).